The primary structure comprises 153 residues: MADWFSSPLKTCTHVCDFPSLAGDPQQEIMCCDSMKNKLQDSRKVLLVSCSVSFNGSFYGGNRNVRGQLQISMVEDDGVCRPIGYVPIGGYLYHNDYGYYEGARTFNLDLESQYLKKDEDYNRKFLVSVFNENGLDSQCDLKVFIVHSIRIKV.

Belongs to the nanoviridae nuclear shuttle protein family.

The protein resides in the host nucleus. The protein localises to the host cytoplasm. Putative nuclear shuttle protein. The chain is Putative nuclear shuttle protein (DNA-N) from Cicer arietinum (Chickpea).